A 429-amino-acid chain; its full sequence is Enolase (429 aa).

Q162 contributes to the (2R)-2-phosphoglycerate binding site. E204 (proton donor) is an active-site residue. 3 residues coordinate Mg(2+): D241, E283, and D310. Residues K335, R364, S365, and K386 each coordinate (2R)-2-phosphoglycerate. K335 functions as the Proton acceptor in the catalytic mechanism.

The protein belongs to the enolase family. Mg(2+) serves as cofactor.

Its subcellular location is the cytoplasm. It localises to the secreted. It is found in the cell surface. It catalyses the reaction (2R)-2-phosphoglycerate = phosphoenolpyruvate + H2O. Its pathway is carbohydrate degradation; glycolysis; pyruvate from D-glyceraldehyde 3-phosphate: step 4/5. Catalyzes the reversible conversion of 2-phosphoglycerate (2-PG) into phosphoenolpyruvate (PEP). It is essential for the degradation of carbohydrates via glycolysis. The chain is Enolase from Mycobacterium sp. (strain JLS).